The chain runs to 1583 residues: Transcriptional activator GLI3 (1583 aa).

An N-acetylmethionine modification is found at Met-1. Polar residues-rich tracts occupy residues Met-1–Ala-10 and Ile-58–Ser-78. Positions Met-1–Ser-78 are disordered. Arg-175 carries the omega-N-methylarginine modification. The disordered stretch occupies residues Gln-368–Glu-475. Over residues Val-403–Ser-421 the composition is skewed to low complexity. Residue Lys-438 forms a Glycyl lysine isopeptide (Lys-Gly) (interchain with G-Cter in SUMO2) linkage. The span at Ser-448 to Gly-457 shows a compositional bias: polar residues. Basic and acidic residues predominate over residues Val-461–Pro-474. Lys-462 is covalently cross-linked (Glycyl lysine isopeptide (Lys-Gly) (interchain with G-Cter in SUMO2)). 5 C2H2-type zinc fingers span residues Thr-480–His-505, Phe-513–His-540, His-546–His-570, Tyr-576–His-601, and Tyr-607–His-632. The tract at residues Asp-620–Leu-728 is disordered. Residues His-632 to Pro-648 show a composition bias toward basic and acidic residues. A Phosphoserine modification is found at Ser-664. Over residues Ser-684 to Lys-699 the composition is skewed to basic and acidic residues. Residues Ser-703–Ser-726 are compositionally biased toward low complexity. The mediates interaction with DZIP1 stretch occupies residues Asp-745 to Asn-845. A Glycyl lysine isopeptide (Lys-Gly) (interchain with G-Cter in ubiquitin) cross-link involves residue Lys-773. Lys-779 participates in a covalent cross-link: Glycyl lysine isopeptide (Lys-Gly) (interchain with G-Cter in SUMO2); alternate. A Glycyl lysine isopeptide (Lys-Gly) (interchain with G-Cter in ubiquitin); alternate cross-link involves residue Lys-779. Residues Lys-784 and Lys-800 each participate in a glycyl lysine isopeptide (Lys-Gly) (interchain with G-Cter in ubiquitin) cross-link. The disordered stretch occupies residues Gly-809–Pro-828. The span at Asn-810–Ser-820 shows a compositional bias: polar residues. Ser-849, Ser-865, Ser-877, Ser-907, Ser-980, and Ser-1006 each carry phosphoserine; by PKA. Over residues Arg-863–Ser-880 the composition is skewed to low complexity. Positions Arg-863–Leu-918 are disordered. The interval Glu-1164–Pro-1189 is disordered. A compositionally biased stretch (low complexity) spans Ser-1166 to Ser-1175.

The protein belongs to the GLI C2H2-type zinc-finger protein family. The phosphorylated form interacts with BTRC. The full-length GLI3 form (GLI3FL) interacts with SUFU and this interaction regulates the formation of either repressor or activator forms of GLI3. Its association with SUFU is regulated by Hh signaling and dissociation of the SUFU-GLI3 interaction requires the presence of the ciliary motor KIF3A. Interacts with KIF7. The activator form of GLI3 (GLI3A) but not the repressor form (GLI3R) can interact with TRPS1. Interacts with ZIC1. Interacts with ZIC3 (via C2H2-type domains 3, 4 and 5); the interaction enhances its transcriptional activity. Interacts with WRD11; the interaction associates EMX1 with GLI3. Interacts with DZIP1; retains GLI3 within the cytoplasm. Phosphorylated by DYRK2 (in vitro). Phosphorylated on multiple sites by protein kinase A (PKA) and phosphorylation by PKA primes further phosphorylation by CK1 and GSK3. Phosphorylation is essential for its proteolytic processing. Post-translationally, transcriptional repressor GLI3R, a C-terminally truncated form, is generated from the full-length GLI3 protein (GLI3FL/GLI3-190) through proteolytic processing. This process requires PKA-primed phosphorylation of GLI3, ubiquitination of GLI3 and the presence of BTRC. GLI3FL is complexed with SUFU in the cytoplasm and is maintained in a neutral state. Without the Hh signal, the SUFU-GLI3 complex is recruited to cilia, leading to the efficient processing of GLI3FL into GLI3R. GLI3R formation leads to its dissociation from SUFU, allowing it to translocate into the nucleus, and repress Hh target genes. When Hh signaling is initiated, SUFU dissociates from GLI3FL and this has two consequences. First, GLI3R production is halted. Second, free GLI3FL translocates to the nucleus, where it is phosphorylated, destabilized, and converted to a transcriptional activator (GLI3A). Phosphorylated in vitro by ULK3.

The protein localises to the nucleus. Its subcellular location is the cytoplasm. It localises to the cell projection. It is found in the cilium. Has a dual function as a transcriptional activator and a repressor of the sonic hedgehog (Shh) pathway, and plays a role in limb development. The full-length GLI3 form (GLI3FL) after phosphorylation and nuclear translocation, acts as an activator (GLI3A) while GLI3R, its C-terminally truncated form, acts as a repressor. A proper balance between the GLI3 activator and the repressor GLI3R, rather than the repressor gradient itself or the activator/repressor ratio gradient, specifies limb digit number and identity. In concert with TRPS1, plays a role in regulating the size of the zone of distal chondrocytes, in restricting the zone of PTHLH expression in distal cells and in activating chondrocyte proliferation. Binds to the minimal GLI-consensus sequence 5'-GGGTGGTC-3'. The protein is Transcriptional activator GLI3 (Gli3) of Mus musculus (Mouse).